We begin with the raw amino-acid sequence, 153 residues long: Deoxyuridine 5'-triphosphate nucleotidohydrolase (153 aa).

Substrate is bound by residues 71–73 (RSG), N84, 88–90 (TID), and K98.

Belongs to the dUTPase family. Mg(2+) serves as cofactor.

The enzyme catalyses dUTP + H2O = dUMP + diphosphate + H(+). Its pathway is pyrimidine metabolism; dUMP biosynthesis; dUMP from dCTP (dUTP route): step 2/2. Its function is as follows. This enzyme is involved in nucleotide metabolism: it produces dUMP, the immediate precursor of thymidine nucleotides and it decreases the intracellular concentration of dUTP so that uracil cannot be incorporated into DNA. This Ehrlichia canis (strain Jake) protein is Deoxyuridine 5'-triphosphate nucleotidohydrolase.